Consider the following 178-residue polypeptide: Large ribosomal subunit protein uL6 (178 aa).

The protein belongs to the universal ribosomal protein uL6 family. In terms of assembly, part of the 50S ribosomal subunit.

This protein binds to the 23S rRNA, and is important in its secondary structure. It is located near the subunit interface in the base of the L7/L12 stalk, and near the tRNA binding site of the peptidyltransferase center. In Thermobifida fusca (strain YX), this protein is Large ribosomal subunit protein uL6.